The sequence spans 290 residues: 4-diphosphocytidyl-2-C-methyl-D-erythritol kinase (290 aa).

Residue K13 is part of the active site. 93-103 provides a ligand contact to ATP; that stretch reads PVQAGLGGGSA. Residue D135 is part of the active site.

The protein belongs to the GHMP kinase family. IspE subfamily.

It carries out the reaction 4-CDP-2-C-methyl-D-erythritol + ATP = 4-CDP-2-C-methyl-D-erythritol 2-phosphate + ADP + H(+). It functions in the pathway isoprenoid biosynthesis; isopentenyl diphosphate biosynthesis via DXP pathway; isopentenyl diphosphate from 1-deoxy-D-xylulose 5-phosphate: step 3/6. In terms of biological role, catalyzes the phosphorylation of the position 2 hydroxy group of 4-diphosphocytidyl-2C-methyl-D-erythritol. The polypeptide is 4-diphosphocytidyl-2-C-methyl-D-erythritol kinase (Desulfitobacterium hafniense (strain Y51)).